The following is a 179-amino-acid chain: Transcription initiation factor TFIID subunit 10 (179 aa).

The segment at 1-23 (MNDPEQYEPSSSTESVLMPPPAL) is disordered.

This sequence belongs to the TAF10 family. In terms of assembly, component of the TFIID basal transcription factor complex, composed of TATA-box-binding protein tbp-1, and a number of TBP-associated factors (TAFs).

Its subcellular location is the nucleus. The TFIID basal transcription factor complex plays a major role in the initiation of RNA polymerase II (Pol II)-dependent transcription. TFIID recognizes and binds promoters via its subunit tbp-1, a TATA-box-binding protein, and promotes assembly of the pre-initiation complex (PIC). The TFIID complex consists of tbp-1 and TBP-associated factors (TAFs), including taf-10. Essential for early embryonic development, but not required for transcription of some genes; probably acts via activating transcription initiation by RNA Pol II, as part of the TFIID complex. The chain is Transcription initiation factor TFIID subunit 10 from Caenorhabditis elegans.